A 285-amino-acid polypeptide reads, in one-letter code: Bifunctional protein FolD (285 aa).

Residues 166–168 (GRS), S191, and I232 contribute to the NADP(+) site.

This sequence belongs to the tetrahydrofolate dehydrogenase/cyclohydrolase family. As to quaternary structure, homodimer.

It carries out the reaction (6R)-5,10-methylene-5,6,7,8-tetrahydrofolate + NADP(+) = (6R)-5,10-methenyltetrahydrofolate + NADPH. The catalysed reaction is (6R)-5,10-methenyltetrahydrofolate + H2O = (6R)-10-formyltetrahydrofolate + H(+). Its pathway is one-carbon metabolism; tetrahydrofolate interconversion. Functionally, catalyzes the oxidation of 5,10-methylenetetrahydrofolate to 5,10-methenyltetrahydrofolate and then the hydrolysis of 5,10-methenyltetrahydrofolate to 10-formyltetrahydrofolate. The sequence is that of Bifunctional protein FolD from Rickettsia typhi (strain ATCC VR-144 / Wilmington).